The sequence spans 103 residues: Large ribosomal subunit protein eL14 (103 aa).

Belongs to the eukaryotic ribosomal protein eL14 family.

This chain is Large ribosomal subunit protein eL14, found in Pyrobaculum calidifontis (strain DSM 21063 / JCM 11548 / VA1).